The chain runs to 92 residues: Cell division topological specificity factor (92 aa).

It belongs to the MinE family.

Functionally, prevents the cell division inhibition by proteins MinC and MinD at internal division sites while permitting inhibition at polar sites. This ensures cell division at the proper site by restricting the formation of a division septum at the midpoint of the long axis of the cell. This chain is Cell division topological specificity factor, found in Desulforamulus reducens (strain ATCC BAA-1160 / DSM 100696 / MI-1) (Desulfotomaculum reducens).